Here is a 291-residue protein sequence, read N- to C-terminus: MEHQLFCCEVDTIRRAYQDSNLLNDRVLQTMLKAEENYLPSPNYFKCVQKEIVPKMRKIVATWMLEVCEEQKCEEEVFPLAMNYLDRFLSVEPTKKTRLQLLGATCMFLASKMKETVPLTAEKLCIYTDNSVRPGELLQMELLALNKLKWDLASVTPHDFIEHFLAKLPIHQSSKQILRKHAQTFVALCATDVNFIASPPSMIAAGSVAAAVQGLYLKSTDSCLSSQNLTNFLSQVIRSDPDCLRSCQEQIESLLESSLRQAQQHISTETKRVEEDVDLSCTPTDVRDINI.

Thr282 carries the phosphothreonine modification.

This sequence belongs to the cyclin family. Cyclin D subfamily. Interacts with the CDK4 and CDK6 protein kinases to form a serine/threonine kinase holoenzyme complex. The cyclin subunit imparts substrate specificity to the complex. In terms of processing, phosphorylation at Thr-282 by MAP kinases is required for ubiquitination and degradation by the DCX(AMBRA1) complex. Post-translationally, ubiquitinated by the DCX(AMBRA1) complex during the transition from G1 to S cell phase, leading to its degradation. The DCX(AMBRA1) complex represents the major regulator of CCND1 stability during the G1/S transition.

Its subcellular location is the nucleus. The protein localises to the cytoplasm. Functionally, regulatory component of the cyclin D1-CDK4 (DC) complex that phosphorylates and inhibits members of the retinoblastoma (RB) protein family including RB1 and regulates the cell-cycle during G(1)/S transition. Phosphorylation of RB1 allows dissociation of the transcription factor E2F from the RB/E2F complex and the subsequent transcription of E2F target genes which are responsible for the progression through the G(1) phase. Hypophosphorylates RB1 in early G(1) phase. Cyclin D-CDK4 complexes are major integrators of various mitogenenic and antimitogenic signals. This Danio rerio (Zebrafish) protein is G1/S-specific cyclin-D1 (ccnd1).